The chain runs to 352 residues: Biotin synthase (352 aa).

Residues 44–262 (NRVQVSTLLS…LAVARILMPK (219 aa)) form the Radical SAM core domain. [4Fe-4S] cluster is bound by residues cysteine 59, cysteine 63, and cysteine 66. The [2Fe-2S] cluster site is built by cysteine 103, cysteine 134, cysteine 194, and arginine 266.

It belongs to the radical SAM superfamily. Biotin synthase family. As to quaternary structure, homodimer. The cofactor is [4Fe-4S] cluster. [2Fe-2S] cluster is required as a cofactor.

The enzyme catalyses (4R,5S)-dethiobiotin + (sulfur carrier)-SH + 2 reduced [2Fe-2S]-[ferredoxin] + 2 S-adenosyl-L-methionine = (sulfur carrier)-H + biotin + 2 5'-deoxyadenosine + 2 L-methionine + 2 oxidized [2Fe-2S]-[ferredoxin]. Its pathway is cofactor biosynthesis; biotin biosynthesis; biotin from 7,8-diaminononanoate: step 2/2. Catalyzes the conversion of dethiobiotin (DTB) to biotin by the insertion of a sulfur atom into dethiobiotin via a radical-based mechanism. This Pseudomonas entomophila (strain L48) protein is Biotin synthase.